The sequence spans 562 residues: Membrane protein insertase YidC (562 aa).

A helical transmembrane segment spans residues 1–21 (MDIKRTILIVALAIVTYVGVL). A disordered region spans residues 42-74 (TAPGIPDTAAGNNGSASADVPSATGNTTSAAPL). 5 consecutive transmembrane segments (helical) span residues 343 to 363 (LELT…FWLL), 369 to 389 (ILGN…GLFF), 439 to 459 (LGGC…YWVL), 470 to 490 (WILW…PIIM), and 517 to 537 (PIIF…YWVV).

This sequence belongs to the OXA1/ALB3/YidC family. Type 1 subfamily. Interacts with the Sec translocase complex via SecD. Specifically interacts with transmembrane segments of nascent integral membrane proteins during membrane integration.

Its subcellular location is the cell inner membrane. Required for the insertion and/or proper folding and/or complex formation of integral membrane proteins into the membrane. Involved in integration of membrane proteins that insert both dependently and independently of the Sec translocase complex, as well as at least some lipoproteins. Aids folding of multispanning membrane proteins. The chain is Membrane protein insertase YidC from Pseudomonas syringae pv. tomato (strain ATCC BAA-871 / DC3000).